Consider the following 545-residue polypeptide: Phenylalanine--tRNA ligase beta subunit (545 aa).

The B5 domain occupies 270 to 346; sequence LEPKERLLTT…KGYGYENIKV (77 aa). Mg(2+) is bound by residues D324, D330, E333, and D334.

This sequence belongs to the phenylalanyl-tRNA synthetase beta subunit family. Type 2 subfamily. As to quaternary structure, tetramer of two alpha and two beta subunits. The cofactor is Mg(2+).

The protein resides in the cytoplasm. The enzyme catalyses tRNA(Phe) + L-phenylalanine + ATP = L-phenylalanyl-tRNA(Phe) + AMP + diphosphate + H(+). The sequence is that of Phenylalanine--tRNA ligase beta subunit from Methanosarcina acetivorans (strain ATCC 35395 / DSM 2834 / JCM 12185 / C2A).